A 157-amino-acid chain; its full sequence is 2-C-methyl-D-erythritol 2,4-cyclodiphosphate synthase (157 aa).

A divalent metal cation-binding residues include D8 and H10. Residues 8-10 and 34-35 each bind 4-CDP-2-C-methyl-D-erythritol 2-phosphate; these read DVH and HS. H42 serves as a coordination point for a divalent metal cation. 4-CDP-2-C-methyl-D-erythritol 2-phosphate contacts are provided by residues 56–58, 61–65, 100–106, 132–135, F139, and R142; these read DIG, FPDTD, AQAPKMA, and TTEE.

Belongs to the IspF family. Homotrimer. A divalent metal cation serves as cofactor.

The catalysed reaction is 4-CDP-2-C-methyl-D-erythritol 2-phosphate = 2-C-methyl-D-erythritol 2,4-cyclic diphosphate + CMP. It participates in isoprenoid biosynthesis; isopentenyl diphosphate biosynthesis via DXP pathway; isopentenyl diphosphate from 1-deoxy-D-xylulose 5-phosphate: step 4/6. Its function is as follows. Involved in the biosynthesis of isopentenyl diphosphate (IPP) and dimethylallyl diphosphate (DMAPP), two major building blocks of isoprenoid compounds. Catalyzes the conversion of 4-diphosphocytidyl-2-C-methyl-D-erythritol 2-phosphate (CDP-ME2P) to 2-C-methyl-D-erythritol 2,4-cyclodiphosphate (ME-CPP) with a corresponding release of cytidine 5-monophosphate (CMP). The sequence is that of 2-C-methyl-D-erythritol 2,4-cyclodiphosphate synthase from Pseudomonas entomophila (strain L48).